We begin with the raw amino-acid sequence, 289 residues long: Protease HtpX homolog (289 aa).

2 consecutive transmembrane segments (helical) span residues 9–29 (TGVLMAFLTALLVGIGYLIGG) and 31–51 (GGMIIAFTIALFMNLISYWFS). Histidine 133 serves as a coordination point for Zn(2+). Glutamate 134 is an active-site residue. Zn(2+) is bound at residue histidine 137. A run of 2 helical transmembrane segments spans residues 143–163 (TLIQTLAAVLAGAIMILVDFA) and 182–202 (IGLILAIVLAPLAATLIQLAI). A Zn(2+)-binding site is contributed by glutamate 207.

This sequence belongs to the peptidase M48B family. Requires Zn(2+) as cofactor.

The protein localises to the cell membrane. This is Protease HtpX homolog from Pyrococcus abyssi (strain GE5 / Orsay).